The primary structure comprises 91 residues: DNA-directed RNA polymerase subunit omega (91 aa).

The protein belongs to the RNA polymerase subunit omega family. As to quaternary structure, the RNAP catalytic core consists of 2 alpha, 1 beta, 1 beta' and 1 omega subunit. When a sigma factor is associated with the core the holoenzyme is formed, which can initiate transcription.

The catalysed reaction is RNA(n) + a ribonucleoside 5'-triphosphate = RNA(n+1) + diphosphate. Promotes RNA polymerase assembly. Latches the N- and C-terminal regions of the beta' subunit thereby facilitating its interaction with the beta and alpha subunits. This is DNA-directed RNA polymerase subunit omega from Edwardsiella ictaluri (strain 93-146).